Here is a 253-residue protein sequence, read N- to C-terminus: MDIIICKDEQEVGKAAAALIAPFATKGGTLGLATGSSPLSTYQELIRMYEAGEVSFKNCKAFLLDEYVGLTRDDENSYFKTIRKEFTDHIDIVDEEVYSPDGANPDPYEAAAEYEAKIAAESVDVQILGIGGNGHIAFNEPSSSLSGLTKVQALHPKTVEDNARFFNTIEEVPTHALTQGLGTLSRAQNIVLVATGEGKADAIRGTVEGPLTAMCPGSILQMHNNATIIVDEAAASKLENADHYRLMEQLKLR.

D65 functions as the Proton acceptor; for enolization step in the catalytic mechanism. The active-site For ring-opening step is the N133. The active-site Proton acceptor; for ring-opening step is the H135. The For ring-opening step role is filled by E140.

This sequence belongs to the glucosamine/galactosamine-6-phosphate isomerase family. NagB subfamily.

It carries out the reaction alpha-D-glucosamine 6-phosphate + H2O = beta-D-fructose 6-phosphate + NH4(+). The protein operates within amino-sugar metabolism; N-acetylneuraminate degradation; D-fructose 6-phosphate from N-acetylneuraminate: step 5/5. Catalyzes the reversible isomerization-deamination of glucosamine 6-phosphate (GlcN6P) to form fructose 6-phosphate (Fru6P) and ammonium ion. The sequence is that of Glucosamine-6-phosphate deaminase from Corynebacterium glutamicum (strain ATCC 13032 / DSM 20300 / JCM 1318 / BCRC 11384 / CCUG 27702 / LMG 3730 / NBRC 12168 / NCIMB 10025 / NRRL B-2784 / 534).